The sequence spans 216 residues: Histidine biosynthesis bifunctional protein HisIE (216 aa).

The interval 1-132 is phosphoribosyl-AMP cyclohydrolase; it reads MENILKELKF…KVYEAENAKI (132 aa). Positions 133 to 216 are phosphoribosyl-ATP pyrophosphohydrolase; sequence LQEIYDVIVD…IKLEDIYEEA (84 aa).

It in the N-terminal section; belongs to the PRA-CH family. In the C-terminal section; belongs to the PRA-PH family.

It localises to the cytoplasm. The catalysed reaction is 1-(5-phospho-beta-D-ribosyl)-ATP + H2O = 1-(5-phospho-beta-D-ribosyl)-5'-AMP + diphosphate + H(+). The enzyme catalyses 1-(5-phospho-beta-D-ribosyl)-5'-AMP + H2O = 1-(5-phospho-beta-D-ribosyl)-5-[(5-phospho-beta-D-ribosylamino)methylideneamino]imidazole-4-carboxamide. It participates in amino-acid biosynthesis; L-histidine biosynthesis; L-histidine from 5-phospho-alpha-D-ribose 1-diphosphate: step 2/9. Its pathway is amino-acid biosynthesis; L-histidine biosynthesis; L-histidine from 5-phospho-alpha-D-ribose 1-diphosphate: step 3/9. The sequence is that of Histidine biosynthesis bifunctional protein HisIE (hisI) from Thermoanaerobacter pseudethanolicus (strain ATCC 33223 / 39E) (Clostridium thermohydrosulfuricum).